Reading from the N-terminus, the 122-residue chain is Large ribosomal subunit protein uL14 (122 aa).

Belongs to the universal ribosomal protein uL14 family. As to quaternary structure, part of the 50S ribosomal subunit. Forms a cluster with proteins L3 and L19. In the 70S ribosome, L14 and L19 interact and together make contacts with the 16S rRNA in bridges B5 and B8.

In terms of biological role, binds to 23S rRNA. Forms part of two intersubunit bridges in the 70S ribosome. This chain is Large ribosomal subunit protein uL14, found in Fervidobacterium nodosum (strain ATCC 35602 / DSM 5306 / Rt17-B1).